The chain runs to 378 residues: Sphingosine 1-phosphate receptor 3 (378 aa).

The Extracellular segment spans residues 1 to 44 (MATTHAQGHQPVLGNDTLREHYDYVGKLAGRLRDPPEGGTLITT). Asparagine 15 carries N-linked (GlcNAc...) asparagine glycosylation. A helical membrane pass occupies residues 45 to 65 (ILFLVTCSFIVLENLMVLIAI). Residues 66–74 (WKNNKFHNR) are Cytoplasmic-facing. Residues 75–95 (MYFFIGNLALCDLLAGIAYKV) traverse the membrane as a helical segment. The Extracellular portion of the chain corresponds to 96–115 (NILMSGRKTFSLSPTVWFLR). The helical transmembrane segment at 116–136 (EGSMFVALGASTCSLLAIAIE) threads the bilayer. Residues 137 to 154 (RHLTMIKMRPYDANKKHR) are Cytoplasmic-facing. The chain crosses the membrane as a helical span at residues 155–175 (VFLLIGMCWLIAFSLGALPIL). Residues 176–196 (GWNCLENFPDCSTILPLYSKK) lie on the Extracellular side of the membrane. A helical transmembrane segment spans residues 197–217 (YIAFLISIFTAILVTIVILYA). At 218–244 (RIYCLVKSSSRRVANHNSERSMALLRT) the chain is on the cytoplasmic side. The chain crosses the membrane as a helical span at residues 245-265 (VVIVVSVFIACWSPLFILFLI). The Extracellular segment spans residues 266-281 (DVACRAKECSILFKSQ). A helical membrane pass occupies residues 282-302 (WFIMLAVLNSAMNPVIYTLAS). Over 303-378 (KEMRRAFFRL…RSFQNGVLCK (76 aa)) the chain is Cytoplasmic. A disordered region spans residues 323–354 (TQASPMQPALDPSRSKSSSSNNSSHSPKVKED). Residue serine 326 is modified to Phosphoserine. Residues 337 to 348 (SKSSSSNNSSHS) show a composition bias toward low complexity.

This sequence belongs to the G-protein coupled receptor 1 family. In terms of tissue distribution, most abundant in heart, lung, kidney and spleen; low but detectable in brain, thymus, muscle and testis; and nearly undetectable in liver, stomach, and intestine. Expressed in embryonic lung from embryonic day 14-18. Also abundantly detected in embryonic nasal cartilage, sphenoid bone, vena cava, Meckel's cartilage/incisor teeth, genital tubercle and bladder.

It localises to the cell membrane. Its function is as follows. Receptor for the lysosphingolipid sphingosine 1-phosphate (S1P). S1P is a bioactive lysophospholipid that elicits diverse physiological effect on most types of cells and tissues. This Mus musculus (Mouse) protein is Sphingosine 1-phosphate receptor 3 (S1pr3).